Consider the following 391-residue polypeptide: Processive diacylglycerol beta-glucosyltransferase (391 aa).

It belongs to the glycosyltransferase 28 family. UgtP subfamily.

It localises to the cell membrane. It carries out the reaction a 1,2-diacyl-3-O-(beta-D-glucopyranosyl)-sn-glycerol + UDP-alpha-D-glucose = a 1,2-diacyl-3-O-(beta-D-Glc-(1-&gt;6)-beta-D-Glc)-sn-glycerol + UDP + H(+). The catalysed reaction is a 1,2-diacyl-sn-glycerol + UDP-alpha-D-glucose = a 1,2-diacyl-3-O-(beta-D-glucopyranosyl)-sn-glycerol + UDP + H(+). Its pathway is glycolipid metabolism; diglucosyl-diacylglycerol biosynthesis. Functionally, processive glucosyltransferase involved in the biosynthesis of both the bilayer- and non-bilayer-forming membrane glucolipids. Is able to successively transfer two glucosyl residues to diacylglycerol (DAG), thereby catalyzing the formation of beta-monoglucosyl-DAG (3-O-(beta-D-glucopyranosyl)-1,2-diacyl-sn-glycerol) and beta-diglucosyl-DAG (3-O-(beta-D-glucopyranosyl-beta-(1-&gt;6)-D-glucopyranosyl)-1,2-diacyl-sn-glycerol). Beta-diglucosyl-DAG is the predominant glycolipid found in Bacillales and is also used as a membrane anchor for lipoteichoic acid (LTA). In Staphylococcus haemolyticus (strain JCSC1435), this protein is Processive diacylglycerol beta-glucosyltransferase.